Reading from the N-terminus, the 339-residue chain is uncharacterized protein (339 aa).

2 VOC domains span residues 2-127 and 141-276; these read EFDY…VRSE and TIDH…CLEI. Positions 144, 222, and 306 each coordinate Fe cation.

This sequence belongs to the 4HPPD family. Fe cation is required as a cofactor.

This is an uncharacterized protein from Synechocystis sp. (strain ATCC 27184 / PCC 6803 / Kazusa).